The chain runs to 151 residues: Phosphoribosyl-AMP cyclohydrolase (151 aa).

Aspartate 94 lines the Mg(2+) pocket. Cysteine 95 serves as a coordination point for Zn(2+). Mg(2+)-binding residues include aspartate 96 and aspartate 98. The Zn(2+) site is built by cysteine 112 and cysteine 119.

Belongs to the PRA-CH family. In terms of assembly, homodimer. The cofactor is Mg(2+). Requires Zn(2+) as cofactor.

It localises to the cytoplasm. It catalyses the reaction 1-(5-phospho-beta-D-ribosyl)-5'-AMP + H2O = 1-(5-phospho-beta-D-ribosyl)-5-[(5-phospho-beta-D-ribosylamino)methylideneamino]imidazole-4-carboxamide. It participates in amino-acid biosynthesis; L-histidine biosynthesis; L-histidine from 5-phospho-alpha-D-ribose 1-diphosphate: step 3/9. Catalyzes the hydrolysis of the adenine ring of phosphoribosyl-AMP. In Rhodopseudomonas palustris (strain ATCC BAA-98 / CGA009), this protein is Phosphoribosyl-AMP cyclohydrolase.